The primary structure comprises 657 residues: DNA-directed RNA polymerase III subunit RPC3 (657 aa).

A disordered region spans residues 390-450 (HSNQSLKRKQ…LDLDEDDSDP (61 aa)). Acidic residues predominate over residues 428–448 (EESEEENEEGDANLDLDEDDS). Positions 584–605 (LTWNLARLISKLETLKEENATL) are leucine-zipper.

Belongs to the RNA polymerase beta chain family. In terms of assembly, component of the RNA polymerase III (Pol III) complex consisting of 17 subunits.

It is found in the nucleus. In terms of biological role, DNA-dependent RNA polymerase catalyzes the transcription of DNA into RNA using the four ribonucleoside triphosphates as substrates. Specific core component of RNA polymerase III which synthesizes small RNAs, such as 5S rRNA and tRNAs. The polypeptide is DNA-directed RNA polymerase III subunit RPC3 (RPC82) (Kluyveromyces lactis (strain ATCC 8585 / CBS 2359 / DSM 70799 / NBRC 1267 / NRRL Y-1140 / WM37) (Yeast)).